Consider the following 153-residue polypeptide: Insulin-like growth factor 1 (153 aa).

Residues 49–77 (GPETLCGAELVDALQFVCGDRGFYFNKPT) form a b region. Cystine bridges form between Cys-54–Cys-96, Cys-66–Cys-109, and Cys-95–Cys-100. Residues 78–89 (GYGSSSRRAPQT) form a c region. Residues 90–110 (GIVDECCFRSCDLRRLEMYCA) are a. Positions 111–118 (PLKPAKSA) are d. Residues 119–153 (RSVRAQRHTDMPKAQKEVHLKNASRGSAGNKNYRM) constitute a propeptide, e peptide. The segment at 120 to 153 (SVRAQRHTDMPKAQKEVHLKNASRGSAGNKNYRM) is disordered. Residues 125-138 (RHTDMPKAQKEVHL) are compositionally biased toward basic and acidic residues. Polar residues predominate over residues 142 to 153 (SRGSAGNKNYRM).

The protein belongs to the insulin family. As to quaternary structure, forms a ternary complex with IGFR1 and ITGAV:ITGB3. Forms a ternary complex with IGFR1 and ITGA6:ITGB4. Forms a ternary complex with IGFBP3 and ALS.

It localises to the secreted. The insulin-like growth factors, isolated from plasma, are structurally and functionally related to insulin but have a much higher growth-promoting activity. May be a physiological regulator of [1-14C]-2-deoxy-D-glucose (2DG) transport and glycogen synthesis in osteoblasts. Stimulates glucose transport in bone-derived osteoblastic (PyMS) cells and is effective at much lower concentrations than insulin, not only regarding glycogen and DNA synthesis but also with regard to enhancing glucose uptake. May play a role in synapse maturation. Ca(2+)-dependent exocytosis of IGF1 is required for sensory perception of smell in the olfactory bulb. Acts as a ligand for IGF1R. Binds to the alpha subunit of IGF1R, leading to the activation of the intrinsic tyrosine kinase activity which autophosphorylates tyrosine residues in the beta subunit thus initiating a cascade of down-stream signaling events leading to activation of the PI3K-AKT/PKB and the Ras-MAPK pathways. Binds to integrins ITGAV:ITGB3 and ITGA6:ITGB4. Its binding to integrins and subsequent ternary complex formation with integrins and IGFR1 are essential for IGF1 signaling. Induces the phosphorylation and activation of IGFR1, MAPK3/ERK1, MAPK1/ERK2 and AKT1. As part of the MAPK/ERK signaling pathway, acts as a negative regulator of apoptosis in cardiomyocytes via promotion of STUB1/CHIP-mediated ubiquitination and degradation of ICER-type isoforms of CREM. This is Insulin-like growth factor 1 from Ailuropoda melanoleuca (Giant panda).